Reading from the N-terminus, the 642-residue chain is tRNA uridine 5-carboxymethylaminomethyl modification enzyme MnmG (642 aa).

FAD contacts are provided by residues 10 to 15, Val122, and Ser177; that span reads GAGHAG. 269–283 contacts NAD(+); the sequence is SARYCPSLEDKVMRF. An FAD-binding site is contributed by Gln366.

Belongs to the MnmG family. Homodimer. Heterotetramer of two MnmE and two MnmG subunits. FAD is required as a cofactor.

It is found in the cytoplasm. NAD-binding protein involved in the addition of a carboxymethylaminomethyl (cmnm) group at the wobble position (U34) of certain tRNAs, forming tRNA-cmnm(5)s(2)U34. The polypeptide is tRNA uridine 5-carboxymethylaminomethyl modification enzyme MnmG (Syntrophobacter fumaroxidans (strain DSM 10017 / MPOB)).